The following is a 398-amino-acid chain: 4-hydroxy-3-methylbut-2-enyl diphosphate reductase (398 aa).

Cys-66 lines the [4Fe-4S] cluster pocket. (2E)-4-hydroxy-3-methylbut-2-enyl diphosphate is bound at residue His-96. A dimethylallyl diphosphate-binding site is contributed by His-96. An isopentenyl diphosphate-binding site is contributed by His-96. Residue Cys-157 coordinates [4Fe-4S] cluster. His-185 is a (2E)-4-hydroxy-3-methylbut-2-enyl diphosphate binding site. His-185 is a binding site for dimethylallyl diphosphate. His-185 contributes to the isopentenyl diphosphate binding site. Catalysis depends on Glu-187, which acts as the Proton donor. Position 250 (Thr-250) interacts with (2E)-4-hydroxy-3-methylbut-2-enyl diphosphate. Residue Cys-288 participates in [4Fe-4S] cluster binding. Positions 317, 318, 319, and 380 each coordinate (2E)-4-hydroxy-3-methylbut-2-enyl diphosphate. 4 residues coordinate dimethylallyl diphosphate: Ser-317, Ser-318, Asn-319, and Ser-380. Isopentenyl diphosphate-binding residues include Ser-317, Ser-318, Asn-319, and Ser-380.

It belongs to the IspH family. [4Fe-4S] cluster is required as a cofactor.

The enzyme catalyses isopentenyl diphosphate + 2 oxidized [2Fe-2S]-[ferredoxin] + H2O = (2E)-4-hydroxy-3-methylbut-2-enyl diphosphate + 2 reduced [2Fe-2S]-[ferredoxin] + 2 H(+). It catalyses the reaction dimethylallyl diphosphate + 2 oxidized [2Fe-2S]-[ferredoxin] + H2O = (2E)-4-hydroxy-3-methylbut-2-enyl diphosphate + 2 reduced [2Fe-2S]-[ferredoxin] + 2 H(+). The protein operates within isoprenoid biosynthesis; dimethylallyl diphosphate biosynthesis; dimethylallyl diphosphate from (2E)-4-hydroxy-3-methylbutenyl diphosphate: step 1/1. It participates in isoprenoid biosynthesis; isopentenyl diphosphate biosynthesis via DXP pathway; isopentenyl diphosphate from 1-deoxy-D-xylulose 5-phosphate: step 6/6. In terms of biological role, catalyzes the conversion of 1-hydroxy-2-methyl-2-(E)-butenyl 4-diphosphate (HMBPP) into a mixture of isopentenyl diphosphate (IPP) and dimethylallyl diphosphate (DMAPP). Acts in the terminal step of the DOXP/MEP pathway for isoprenoid precursor biosynthesis. This is 4-hydroxy-3-methylbut-2-enyl diphosphate reductase from Prochlorococcus marinus subsp. pastoris (strain CCMP1986 / NIES-2087 / MED4).